The chain runs to 453 residues: MSYQQPQLSGPLQRETDSSDRESLISGHEHGGKSSQSAAVFNVVNSVIGSGIIGLPYSMKQAGFPLGILLLFLVSYITDFSLVLLIKGGALSGTDSYQSLVNKTFGFPGYLLLSTLQFMYPFIAMISYNIITGDTLSKVFQRLPGVDPGGWFISRHFIIVVSTVTCTLPLSLYRDIAKLGKISFISTILTTVILGIVMTRAISLGPNIPKTDNAWVFAKPNAIQAIGVMSFAFICHHNCFLVYGSLEEPTVAKWRRIIHTSILVSVFICVLFATCGYFTFTGFTQGDLFENYCRSDDLVTFGRFCYGITVILTYPIECFVTREVIANVFFGGTLSSVFHTVLAVLIVTAATLVSLMIECLGIVLELNGVLCAAPLIFIIPSACYLKLSEEPRTHSDKIMACVMFPVGAVVMVVGFVMAITNPQDCTHGQEMFYCFPENVSFTNTSWSHLQLTT.

The span at 1–10 (MSYQQPQLSG) shows a compositional bias: polar residues. Positions 1 to 34 (MSYQQPQLSGPLQRETDSSDRESLISGHEHGGKS) are disordered. Residues 14-32 (RETDSSDRESLISGHEHGG) show a composition bias toward basic and acidic residues. 11 helical membrane passes run 39–59 (AVFN…PYSM), 66–86 (LGIL…VLLI), 106–126 (GFPG…IAMI), 150–170 (GWFI…TLPL), 179–199 (LGKI…IVMT), 222–242 (AIQA…CFLV), 262–282 (ILVS…TFTG), 299–319 (VTFG…IECF), 337–357 (VFHT…SLMI), 359–379 (CLGI…IFII), and 398–418 (IMAC…FVMA). N-linked (GlcNAc...) asparagine glycans are attached at residues N438 and N443.

It belongs to the amino acid/polyamine transporter 2 family.

Its subcellular location is the membrane. Functionally, putative sodium-dependent amino acid/proton antiporter. The protein is Putative sodium-coupled neutral amino acid transporter 11 (Slc38a11) of Mus musculus (Mouse).